The chain runs to 520 residues: Transactivator/viroplasmin protein (520 aa).

The disordered stretch occupies residues 487–520; the sequence is QNASADSGPKDGPPPTRSIVEKEDVPTTSSKQVD.

Belongs to the caulimoviridae viroplasmin family.

The protein resides in the host cytoplasm. Enhances the ribosomal termination-reinitiation event leading to the translation of major open reading frames on the polycistronic viral RNAs. The polypeptide is Transactivator/viroplasmin protein (Arabidopsis thaliana (Mouse-ear cress)).